A 709-amino-acid chain; its full sequence is Homeobox-leucine zipper protein HDG4 (709 aa).

The segment at 61 to 92 is disordered; that stretch reads ESGSGKSTGSGHDPVENTAIEQEPPAAKKKRY. The segment at residues 88–147 is a DNA-binding region (homeobox); that stretch reads KKKRYHRHTASQIQQMEALFKENAHPDTKTRLRLSKKLGLSPIQVKFWFQNKRTQIKAQQ. A coiled-coil region spans residues 137-205; the sequence is QNKRTQIKAQ…LDRLRSIVSM (69 aa). One can recognise an START domain in the interval 229-466; that stretch reads AEEEKAIDME…LKRQCERMAS (238 aa).

The protein belongs to the HD-ZIP homeobox family. Class IV subfamily. In terms of tissue distribution, expressed in flowers.

It is found in the nucleus. Probable transcription factor. In Arabidopsis thaliana (Mouse-ear cress), this protein is Homeobox-leucine zipper protein HDG4.